Consider the following 349-residue polypeptide: Isopentenyl-diphosphate delta-isomerase (349 aa).

6–7 (RK) is a binding site for substrate. FMN contacts are provided by residues 62-64 (AMT), Ser-93, and Asn-122. Gln-152 provides a ligand contact to substrate. A Mg(2+)-binding site is contributed by Glu-153. FMN contacts are provided by residues Lys-184, Thr-214, 258–259 (GG), and 280–281 (AG).

It belongs to the IPP isomerase type 2 family. As to quaternary structure, homooctamer. Dimer of tetramers. It depends on FMN as a cofactor. NADPH is required as a cofactor. The cofactor is Mg(2+).

It localises to the cytoplasm. It catalyses the reaction isopentenyl diphosphate = dimethylallyl diphosphate. Functionally, involved in the biosynthesis of isoprenoids. Catalyzes the 1,3-allylic rearrangement of the homoallylic substrate isopentenyl (IPP) to its allylic isomer, dimethylallyl diphosphate (DMAPP). This chain is Isopentenyl-diphosphate delta-isomerase, found in Bacillus subtilis (strain 168).